Reading from the N-terminus, the 262-residue chain is Thiamine thiazole synthase (262 aa).

NAD(+)-binding positions include Ala-36, Glu-55–Lys-56, Gly-63, Val-127, and His-154–Asp-156. Positions 156 and 171 each coordinate Fe cation. Position 224 (Met-224) interacts with NAD(+). Arg-234 is a glycine binding site.

Belongs to the THI4 family. As to quaternary structure, homooctamer; tetramer of dimers. Requires Fe(2+) as cofactor.

The enzyme catalyses hydrogen sulfide + glycine + NAD(+) = ADP-5-ethyl-4-methylthiazole-2-carboxylate + nicotinamide + 3 H2O + H(+). It functions in the pathway cofactor biosynthesis; thiamine diphosphate biosynthesis. Functionally, involved in the biosynthesis of the thiazole moiety of thiamine. Catalyzes the conversion of NAD and glycine to adenosine diphosphate 5-(2-hydroxyethyl)-4-methylthiazole-2-carboxylate (ADT), an adenylated thiazole intermediate, using free sulfide as a source of sulfur. This Methanothrix thermoacetophila (strain DSM 6194 / JCM 14653 / NBRC 101360 / PT) (Methanosaeta thermophila) protein is Thiamine thiazole synthase.